Consider the following 297-residue polypeptide: UDP-N-acetylenolpyruvoylglucosamine reductase (297 aa).

The FAD-binding PCMH-type domain maps to 27-191 (TGGNADIFVM…LDATFSLELE (165 aa)). Residue arginine 170 is part of the active site. The active-site Proton donor is the serine 220. Residue glutamate 290 is part of the active site.

It belongs to the MurB family. The cofactor is FAD.

It localises to the cytoplasm. The enzyme catalyses UDP-N-acetyl-alpha-D-muramate + NADP(+) = UDP-N-acetyl-3-O-(1-carboxyvinyl)-alpha-D-glucosamine + NADPH + H(+). It participates in cell wall biogenesis; peptidoglycan biosynthesis. Its function is as follows. Cell wall formation. This is UDP-N-acetylenolpyruvoylglucosamine reductase from Listeria welshimeri serovar 6b (strain ATCC 35897 / DSM 20650 / CCUG 15529 / CIP 8149 / NCTC 11857 / SLCC 5334 / V8).